A 799-amino-acid polypeptide reads, in one-letter code: Histidine biosynthesis trifunctional protein (799 aa).

The interval 1–229 is phosphoribosyl-AMP cyclohydrolase; sequence MVLPILPLID…FIVEQENVGF (229 aa). The tract at residues 230 to 312 is phosphoribosyl-ATP pyrophosphohydrolase; the sequence is CHLETMSCFG…FYFALAKLVT (83 aa). The interval 313–799 is histidinol dehydrogenase; that stretch reads NNVSLKDVEN…KLGLIPKDFQ (487 aa). Positions 618 and 621 each coordinate Zn(2+). Residues Glu687 and His688 contribute to the active site. Residues Asp721 and His780 each contribute to the Zn(2+) site.

The protein in the C-terminal section; belongs to the histidinol dehydrogenase family. It depends on Zn(2+) as a cofactor.

It carries out the reaction 1-(5-phospho-beta-D-ribosyl)-5'-AMP + H2O = 1-(5-phospho-beta-D-ribosyl)-5-[(5-phospho-beta-D-ribosylamino)methylideneamino]imidazole-4-carboxamide. It catalyses the reaction 1-(5-phospho-beta-D-ribosyl)-ATP + H2O = 1-(5-phospho-beta-D-ribosyl)-5'-AMP + diphosphate + H(+). The catalysed reaction is L-histidinol + 2 NAD(+) + H2O = L-histidine + 2 NADH + 3 H(+). It functions in the pathway amino-acid biosynthesis; L-histidine biosynthesis; L-histidine from 5-phospho-alpha-D-ribose 1-diphosphate: step 2/9. The protein operates within amino-acid biosynthesis; L-histidine biosynthesis; L-histidine from 5-phospho-alpha-D-ribose 1-diphosphate: step 3/9. It participates in amino-acid biosynthesis; L-histidine biosynthesis; L-histidine from 5-phospho-alpha-D-ribose 1-diphosphate: step 9/9. This is Histidine biosynthesis trifunctional protein (HIS4) from Saccharomyces bayanus (Yeast).